The following is a 153-amino-acid chain: Insulin-like growth factor 1 (153 aa).

A b region spans residues 49–77 (GPETLCGAELVDALQFVCGPRGFYFNKPT). 3 disulfides stabilise this stretch: C54/C96, C66/C109, and C95/C100. The c stretch occupies residues 78–89 (GYGSSIRRAPQT). Positions 90–110 (GIVDECCFRSCDLRRLEMYCA) are a. The segment at 111–118 (PLKPTKAA) is d. The propeptide at 119–153 (RSIRAQRHTDMPKTQKEVHLKNTSRGSAGNKTYRM) is e peptide. Residues 120 to 153 (SIRAQRHTDMPKTQKEVHLKNTSRGSAGNKTYRM) form a disordered region. Over residues 125–138 (RHTDMPKTQKEVHL) the composition is skewed to basic and acidic residues. Residues 139–153 (KNTSRGSAGNKTYRM) are compositionally biased toward polar residues.

Belongs to the insulin family. In terms of assembly, forms a ternary complex with IGFR1 and ITGAV:ITGB3. Forms a ternary complex with IGFR1 and ITGA6:ITGB4. Interacts with SH2D3C isoform 2. Forms a ternary complex with IGFBP3 and ALS.

It localises to the secreted. In terms of biological role, the insulin-like growth factors, isolated from plasma, are structurally and functionally related to insulin but have a much higher growth-promoting activity. May be a physiological regulator of [1-14C]-2-deoxy-D-glucose (2DG) transport and glycogen synthesis in osteoblasts. Stimulates glucose transport in bone-derived osteoblastic (PyMS) cells and is effective at much lower concentrations than insulin, not only regarding glycogen and DNA synthesis but also with regard to enhancing glucose uptake. May play a role in synapse maturation. Ca(2+)-dependent exocytosis of IGF1 is required for sensory perception of smell in the olfactory bulb. Acts as a ligand for IGF1R. Binds to the alpha subunit of IGF1R, leading to the activation of the intrinsic tyrosine kinase activity which autophosphorylates tyrosine residues in the beta subunit thus initiating a cascade of down-stream signaling events leading to activation of the PI3K-AKT/PKB and the Ras-MAPK pathways. Binds to integrins ITGAV:ITGB3 and ITGA6:ITGB4. Its binding to integrins and subsequent ternary complex formation with integrins and IGFR1 are essential for IGF1 signaling. Induces the phosphorylation and activation of IGFR1, MAPK3/ERK1, MAPK1/ERK2 and AKT1. As part of the MAPK/ERK signaling pathway, acts as a negative regulator of apoptosis in cardiomyocytes via promotion of STUB1/CHIP-mediated ubiquitination and degradation of ICER-type isoforms of CREM. In Mus musculus (Mouse), this protein is Insulin-like growth factor 1.